A 98-amino-acid chain; its full sequence is U11-barytoxin-Tl1b (98 aa).

Positions 1–21 (MKTLVLVAVLGLASLYLLSYA) are cleaved as a signal peptide. Residues 22 to 50 (SEVQQLSRDEEEFRALVASFGGLFDTEER) constitute a propeptide that is removed on maturation. 3 disulfides stabilise this stretch: C57/C71, C64/C76, and C70/C89.

Belongs to the neurotoxin 10 (Hwtx-1) family. 25 (ICK4) subfamily. In terms of tissue distribution, expressed by the venom gland.

Its subcellular location is the secreted. In terms of biological role, ion channel inhibitor. This chain is U11-barytoxin-Tl1b, found in Trittame loki (Brush-footed trapdoor spider).